The chain runs to 553 residues: MGSRSSTRIPVPPMLIIRIVLTLSCIRLTSSLDGRPLAAAGIVVTGDKAVNIYTSSQTGSIIVKLLPNMPKDKEACAKAPLEAYNRTLTTLLTPLGDSIRRKQESVTTSGGRRQRRFIGAIIGSVALGVATAAQITAASALIQANQNAANILRLKESIAATNEAVHEVTDGLSQIAVAVGKMQQFVNDQFNNTAQELDCIKITQQVGVELNLYLTELTTVFGPQITSPALTQLTIQALYNLAGGNMDYLLTKLGVGNNQLSSLIGSGLITGNPILYDSQTQILGIQVTLPSVGNLNNMRATYLETLSVSTTKGFASALVPKVVTQVGSVIEELDTSYCIGTDLDLYCTRIVTFPMSPGIYSCLSGNTSACMYSKTEGALTTPYMALKGSVIANCKMTTCRCADPPGIISQNYGEAVSLIDRHSCNVLSLDGITLRLSGEFDATYQKNISILDSQVIVTGNLDISTELGNVNNSISNALNKLEESNSKLDKVNVRLTSTSALITYIVLTVISLVFGVLSLVLACYLMYKQKAQQKTLLWLGNNTLDQMRATTKI.

An N-terminal signal peptide occupies residues 1-31; that stretch reads MGSRSSTRIPVPPMLIIRIVLTLSCIRLTSS. The Extracellular portion of the chain corresponds to 32 to 500; that stretch reads LDGRPLAAAG…VNVRLTSTSA (469 aa). 5 cysteine pairs are disulfide-bonded: cysteine 76–cysteine 199, cysteine 338–cysteine 347, cysteine 362–cysteine 370, cysteine 394–cysteine 399, and cysteine 401–cysteine 424. Residue asparagine 85 is glycosylated (N-linked (GlcNAc...) asparagine; by host). The fusion peptide stretch occupies residues 117-141; sequence FIGAIIGSVALGVATAAQITAASAL. Positions 142 to 170 form a coiled coil; sequence IQANQNAANILRLKESIAATNEAVHEVTD. Asparagine 191 is a glycosylation site (N-linked (GlcNAc...) asparagine; by host). Asparagine 366 is a glycosylation site (N-linked (GlcNAc...) asparagine; by host). Residues asparagine 447 and asparagine 471 are each glycosylated (N-linked (GlcNAc...) asparagine; by host). The stretch at 466 to 491 forms a coiled coil; sequence ELGNVNNSISNALNKLEESNSKLDKV. A helical transmembrane segment spans residues 501-521; that stretch reads LITYIVLTVISLVFGVLSLVL. Residues 522-553 lie on the Cytoplasmic side of the membrane; it reads ACYLMYKQKAQQKTLLWLGNNTLDQMRATTKI. A lipid anchor (S-palmitoyl cysteine; by host) is attached at cysteine 523.

This sequence belongs to the paramyxoviruses fusion glycoprotein family. In terms of assembly, homotrimer of disulfide-linked F1-F2. In terms of processing, the inactive precursor F0 is glycosylated and proteolytically cleaved into F1 and F2 to be functionally active. The cleavage is mediated by cellular proteases during the transport and maturation of the polypeptide.

It localises to the virion membrane. Its subcellular location is the host cell membrane. In terms of biological role, class I viral fusion protein. Under the current model, the protein has at least 3 conformational states: pre-fusion native state, pre-hairpin intermediate state, and post-fusion hairpin state. During viral and plasma cell membrane fusion, the heptad repeat (HR) regions assume a trimer-of-hairpins structure, positioning the fusion peptide in close proximity to the C-terminal region of the ectodomain. The formation of this structure appears to drive apposition and subsequent fusion of viral and plasma cell membranes. Directs fusion of viral and cellular membranes leading to delivery of the nucleocapsid into the cytoplasm. This fusion is pH independent and occurs directly at the outer cell membrane. The trimer of F1-F2 (F protein) probably interacts with HN at the virion surface. Upon HN binding to its cellular receptor, the hydrophobic fusion peptide is unmasked and interacts with the cellular membrane, inducing the fusion between cell and virion membranes. Later in infection, F proteins expressed at the plasma membrane of infected cells could mediate fusion with adjacent cells to form syncytia, a cytopathic effect that could lead to tissue necrosis. This chain is Fusion glycoprotein F0 (F), found in Newcastle disease virus (strain Her/33) (NDV).